We begin with the raw amino-acid sequence, 1193 residues long: Laminin subunit gamma-2 (1193 aa).

The N-terminal stretch at 1-21 (MPALWLGCCLCFSLLLPAARA) is a signal peptide. Cystine bridges form between Cys-28–Cys-37, Cys-30–Cys-53, Cys-56–Cys-65, Cys-68–Cys-81, Cys-84–Cys-96, Cys-86–Cys-102, Cys-104–Cys-113, Cys-116–Cys-128, Cys-139–Cys-150, Cys-141–Cys-155, Cys-157–Cys-166, and Cys-169–Cys-184. 3 consecutive Laminin EGF-like domains span residues 28-83 (CDCN…RCLP), 84-130 (CNCN…GCTQ), and 139-186 (CDCD…GCTQ). Residues 187-196 (CFCYGHSASC) form the Laminin EGF-like 4; first part domain. The 169-residue stretch at 213–381 (QDVDGWKAVQ…SGAPAPWVEQ (169 aa)) folds into the Laminin IV type A domain. N-linked (GlcNAc...) asparagine glycosylation is found at Asn-342 and Asn-362. The Laminin EGF-like 4; second part domain maps to 382-415 (CICPVGYKGQFCQDCASGYKRDSARLGPFGTCIP). 3 consecutive Laminin EGF-like domains span residues 416–461 (CNCQ…SCKP), 462–516 (CPCH…PCQP), and 517–572 (CQCN…KCRA). Disulfide bonds link Cys-462–Cys-470, Cys-464–Cys-481, Cys-484–Cys-493, Cys-496–Cys-514, Cys-517–Cys-531, Cys-519–Cys-538, Cys-541–Cys-550, Cys-553–Cys-570, Cys-573–Cys-585, Cys-575–Cys-591, and Cys-593–Cys-602. The region spanning 573–602 (CNCNPMGSEPVGCRSDGTCVCKPGFGGPNC) is the Laminin EGF-like 8; truncated domain. A domain II and I region spans residues 603–1193 (EHGAFSCPAC…CYNTQALEQQ (591 aa)). The stretch at 611–718 (ACYNQVKIQM…GSQYQNRVRD (108 aa)) forms a coiled coil. Residues Ser-803 and Ser-805 are each glycosylated (O-linked (Xyl...) (chondroitin sulfate) serine). 2 coiled-coil regions span residues 811–1076 (AVVQ…AVQM) and 1117–1193 (EEGL…LEQQ). N-linked (GlcNAc...) asparagine glycosylation is found at Asn-942 and Asn-1033.

Laminin is a complex glycoprotein, consisting of three different polypeptide chains (alpha, beta, gamma), which are bound to each other by disulfide bonds into a cross-shaped molecule comprising one long and three short arms with globules at each end. Gamma-2 is a subunit of laminin-5 (laminin-332 or epiligrin/kalinin/nicein). O-glycosylated; contains chondroitin sulfate (CS). CS attachment is on either Ser-803 or Ser-805. In terms of tissue distribution, the large variant is expressed only in specific epithelial cells of embryonic and neonatal tissues. In 17-week old embryo the small variant is found in cerebral cortex, lung, and distal tubes of kidney, but not in epithelia except for distal tubuli.

It is found in the secreted. It localises to the extracellular space. The protein resides in the extracellular matrix. The protein localises to the basement membrane. In terms of biological role, binding to cells via a high affinity receptor, laminin is thought to mediate the attachment, migration and organization of cells into tissues during embryonic development by interacting with other extracellular matrix components. Ladsin exerts cell-scattering activity toward a wide variety of cells, including epithelial, endothelial, and fibroblastic cells. This chain is Laminin subunit gamma-2 (LAMC2), found in Homo sapiens (Human).